The following is a 155-amino-acid chain: Protein Smg homolog (155 aa).

This sequence belongs to the Smg family.

This chain is Protein Smg homolog, found in Azoarcus sp. (strain BH72).